Here is a 353-residue protein sequence, read N- to C-terminus: Rhodopsin (353 aa).

Over 1–36 (MNGTEGPFFYVPMVNTTGIVRSPYDYPQYYLVSPAA) the chain is Extracellular. N-linked (GlcNAc...) asparagine glycans are attached at residues N2 and N15. A helical transmembrane segment spans residues 37–61 (YAALGAYMFLLILLGFPINFLTLYV). Residues 62 to 73 (TIEHKKLRTPLN) lie on the Cytoplasmic side of the membrane. Residues 74 to 96 (YILLNLAVADLFMVFGGFTTTMY) form a helical membrane-spanning segment. Residues 97 to 110 (TSMHGYFVLGRLGC) lie on the Extracellular side of the membrane. C110 and C187 form a disulfide bridge. The chain crosses the membrane as a helical span at residues 111–133 (NMEGFFATLGGEIGLWSLVVLAV). The 'Ionic lock' involved in activated form stabilization signature appears at 134–136 (ERW). The Cytoplasmic portion of the chain corresponds to 134 to 152 (ERWLVVCKPISNFRFGENH). Residues 153 to 173 (AIMGLAFTWVMACSCAVPPLV) form a helical membrane-spanning segment. The Extracellular segment spans residues 174–202 (GWSRYIPEGMQCSCGVDYYTRAEGFNNES). N-linked (GlcNAc...) asparagine glycosylation occurs at N200. A helical membrane pass occupies residues 203–224 (FVIYMFACHFIIPMCVVFFCYG). Over 225–252 (RLLCAVKEAAAAQQESETTQRAEKEVTR) the chain is Cytoplasmic. The chain crosses the membrane as a helical span at residues 253–274 (MVVIMGIAFLICWCPYASVAWY). Residues 275-286 (IFTHQGSEFGPV) lie on the Extracellular side of the membrane. A helical membrane pass occupies residues 287-308 (FMTLPAFFAKTSSVYNPLIYIL). K296 carries the N6-(retinylidene)lysine modification. The Cytoplasmic portion of the chain corresponds to 309-353 (MNKQFRHCMITTLCCGKNPFEEEEGASTASKTEASSVSSSSVSPA). 2 S-palmitoyl cysteine lipidation sites follow: C322 and C323. Residues 331 to 353 (EEGASTASKTEASSVSSSSVSPA) are disordered. The segment covering 334–353 (ASTASKTEASSVSSSSVSPA) has biased composition (low complexity).

The protein belongs to the G-protein coupled receptor 1 family. Opsin subfamily. In terms of processing, phosphorylated on some or all of the serine and threonine residues present in the C-terminal region. Post-translationally, contains one covalently linked retinal chromophore.

Its subcellular location is the membrane. It localises to the cell projection. It is found in the cilium. The protein localises to the photoreceptor outer segment. Its function is as follows. Photoreceptor required for image-forming vision at low light intensity. While most salt water fish species use retinal as chromophore, most freshwater fish use 3-dehydroretinal, or a mixture of retinal and 3-dehydroretinal. Light-induced isomerization of 11-cis to all-trans retinal triggers a conformational change that activates signaling via G-proteins. Subsequent receptor phosphorylation mediates displacement of the bound G-protein alpha subunit by arrestin and terminates signaling. This chain is Rhodopsin (rho), found in Dicentrarchus labrax (European seabass).